A 329-amino-acid polypeptide reads, in one-letter code: Vomeronasal type-1 receptor 42 (329 aa).

Over 1–32 the chain is Extracellular; that stretch reads MGDILFSSPQSMFSHTMNKNSILHTHSIIGKT. The chain crosses the membrane as a helical span at residues 33 to 53; it reads FFSEIGIGISGNSFLLLVHIL. Residues 54–65 lie on the Cytoplasmic side of the membrane; it reads KFIRGHRPRLTD. Residues 66–86 form a helical membrane-spanning segment; the sequence is LPIGLLSLIHLLMLLVAAFIA. Over 87-109 the chain is Extracellular; it reads TDIFISRRGWDDIICKFLVYLYR. A disulfide bridge links cysteine 101 with cysteine 188. The chain crosses the membrane as a helical span at residues 110–130; that stretch reads VLRGFSLCTTSMLSILQAIIL. Over 131–150 the chain is Cytoplasmic; that stretch reads SPRSSCLAKFKHISPHHISG. A helical membrane pass occupies residues 151 to 171; that stretch reads AILFLSVLYMLIGSQLLVSII. Residues 172 to 209 lie on the Extracellular side of the membrane; that stretch reads ATPNLTMNDFIYVTQSCSILPLSYLMQSIYSTLLAIRE. The N-linked (GlcNAc...) asparagine glycan is linked to asparagine 175. A helical membrane pass occupies residues 210–230; that stretch reads FFLISLMVLSNWYMVALLSMH. The Cytoplasmic segment spans residues 231 to 254; the sequence is RKQTQHLHGTNLSPKKSPEQSATQ. The chain crosses the membrane as a helical span at residues 255 to 275; it reads TILMLISFFLLMTIYDTIVSC. Residues 276–285 are Extracellular-facing; sequence SRTMFLNDPT. A helical membrane pass occupies residues 286-306; the sequence is SYSIELFIMHIYATVSPFVFM. Residues 307–329 are Cytoplasmic-facing; that stretch reads STEKHIVNFLRSLGKRVINFNLH.

The protein belongs to the G-protein coupled receptor 1 family.

It localises to the cell membrane. Its function is as follows. Putative pheromone receptor implicated in the regulation of social and reproductive behavior. The polypeptide is Vomeronasal type-1 receptor 42 (Vmn1r42) (Mus musculus (Mouse)).